We begin with the raw amino-acid sequence, 222 residues long: MKIFLDTANLESIKKFNDMGLLDGITTNPSLMSKEKGNPKDAMEEITKIIKGDVSLEVVSTDFSGMVDEGKRLRQYGDNVVVKVPMTPDGLKACKSLSSEGIPVNVTLVFSPNQALLAAKSGAKYVSPFIGRLDDIGQDGMNLIQDIKDIFKNYPHLKTEILVASVRHPMHVVEAAKIGADVVTLPPGVLDKMLQHPLTKIGLENFLKDWEKVKAENPDIKI.

Catalysis depends on lysine 83, which acts as the Schiff-base intermediate with substrate.

Belongs to the transaldolase family. Type 3B subfamily.

The protein localises to the cytoplasm. It carries out the reaction D-sedoheptulose 7-phosphate + D-glyceraldehyde 3-phosphate = D-erythrose 4-phosphate + beta-D-fructose 6-phosphate. It participates in carbohydrate degradation; pentose phosphate pathway; D-glyceraldehyde 3-phosphate and beta-D-fructose 6-phosphate from D-ribose 5-phosphate and D-xylulose 5-phosphate (non-oxidative stage): step 2/3. Its function is as follows. Transaldolase is important for the balance of metabolites in the pentose-phosphate pathway. The protein is Probable transaldolase of Nitrosopumilus maritimus (strain SCM1).